The sequence spans 294 residues: ATP synthase gamma chain (294 aa).

This sequence belongs to the ATPase gamma chain family. In terms of assembly, F-type ATPases have 2 components, CF(1) - the catalytic core - and CF(0) - the membrane proton channel. CF(1) has five subunits: alpha(3), beta(3), gamma(1), delta(1), epsilon(1). CF(0) has three main subunits: a, b and c.

The protein resides in the cell inner membrane. Functionally, produces ATP from ADP in the presence of a proton gradient across the membrane. The gamma chain is believed to be important in regulating ATPase activity and the flow of protons through the CF(0) complex. The chain is ATP synthase gamma chain from Campylobacter jejuni subsp. doylei (strain ATCC BAA-1458 / RM4099 / 269.97).